Reading from the N-terminus, the 105-residue chain is Probable guanidinium efflux system subunit GdnD (105 aa).

The next 4 membrane-spanning stretches (helical) occupy residues 1-21 (MLHW…VALM), 32-52 (WVLL…YAME), 59-79 (AYAV…ILFY), and 85-105 (AKRI…KILS).

The protein belongs to the drug/metabolite transporter (DMT) superfamily. Small multidrug resistance (SMR) (TC 2.A.7.1) family. YkkC/YkkD subfamily. The efflux pump is composed of GdnC and GdnD.

The protein resides in the cell membrane. In terms of biological role, probably involved in guanidinium transport. In vitro, confers resistance to a broad range of toxic compounds such as cationic dyes, neutral and anionic antimicrobials. This chain is Probable guanidinium efflux system subunit GdnD, found in Bacillus subtilis (strain 168).